A 342-amino-acid polypeptide reads, in one-letter code: Paired box protein Pax-9 (342 aa).

The segment at residues 4-130 (AFGEVNQLGG…SSISRILRNK (127 aa)) is a DNA-binding region (paired). The interval 7–63 (EVNQLGGVFVNGRPLPNAIRLRIVELAQLGIRPCDISRQLRVSHGCVSKILARYNET) is PAI subdomain. An RED subdomain region spans residues 82 to 130 (TVVKHIRTYKQRDPGIFAWEIRDRLLADGVCDKYNVPSVSSISRILRNK). The tract at residues 168-189 (AAAAKVPTPPGVPAIPGSVALP) is interaction with KDM5B.

Interacts with KDM5B. As to expression, in the embryo, expressed in pharyngeal pouches and derivatives, developing vertebral column, tail, head and limbs.

The protein localises to the nucleus. Functionally, transcription factor required for normal development of thymus, parathyroid glands, ultimobranchial bodies, teeth, skeletal elements of skull and larynx as well as distal limbs. The protein is Paired box protein Pax-9 (Pax9) of Mus musculus (Mouse).